Consider the following 364-residue polypeptide: Alanine racemase (364 aa).

K35 acts as the Proton acceptor; specific for D-alanine in catalysis. Residue K35 is modified to N6-(pyridoxal phosphate)lysine. R132 serves as a coordination point for substrate. Y260 serves as the catalytic Proton acceptor; specific for L-alanine. Residue M308 participates in substrate binding.

This sequence belongs to the alanine racemase family. It depends on pyridoxal 5'-phosphate as a cofactor.

It catalyses the reaction L-alanine = D-alanine. It participates in amino-acid biosynthesis; D-alanine biosynthesis; D-alanine from L-alanine: step 1/1. In terms of biological role, catalyzes the interconversion of L-alanine and D-alanine. May also act on other amino acids. This is Alanine racemase (alr) from Acidithiobacillus ferrooxidans (strain ATCC 23270 / DSM 14882 / CIP 104768 / NCIMB 8455) (Ferrobacillus ferrooxidans (strain ATCC 23270)).